The sequence spans 112 residues: Large ribosomal subunit protein eL30 (112 aa).

The protein belongs to the eukaryotic ribosomal protein eL30 family.

This Zea mays (Maize) protein is Large ribosomal subunit protein eL30 (RPL30).